The primary structure comprises 156 residues: 6,7-dimethyl-8-ribityllumazine synthase (156 aa).

5-amino-6-(D-ribitylamino)uracil is bound by residues Phe-23, 57–59 (AYE), and 81–83 (AII). 86 to 87 (GT) contacts (2S)-2-hydroxy-3-oxobutyl phosphate. His-89 functions as the Proton donor in the catalytic mechanism. Phe-114 provides a ligand contact to 5-amino-6-(D-ribitylamino)uracil. Arg-128 contributes to the (2S)-2-hydroxy-3-oxobutyl phosphate binding site.

This sequence belongs to the DMRL synthase family.

It catalyses the reaction (2S)-2-hydroxy-3-oxobutyl phosphate + 5-amino-6-(D-ribitylamino)uracil = 6,7-dimethyl-8-(1-D-ribityl)lumazine + phosphate + 2 H2O + H(+). Its pathway is cofactor biosynthesis; riboflavin biosynthesis; riboflavin from 2-hydroxy-3-oxobutyl phosphate and 5-amino-6-(D-ribitylamino)uracil: step 1/2. Functionally, catalyzes the formation of 6,7-dimethyl-8-ribityllumazine by condensation of 5-amino-6-(D-ribitylamino)uracil with 3,4-dihydroxy-2-butanone 4-phosphate. This is the penultimate step in the biosynthesis of riboflavin. This is 6,7-dimethyl-8-ribityllumazine synthase from Helicobacter pylori (strain HPAG1).